Here is a 355-residue protein sequence, read N- to C-terminus: Guanine nucleotide-binding protein G(i) subunit alpha (355 aa).

G2 is lipidated: N-myristoyl glycine. C3 carries S-palmitoyl cysteine lipidation. Residues 33 to 355 form the G-alpha domain; it reads REVKLLLLGA…KNNLKDCGLF (323 aa). The segment at 36–49 is G1 motif; sequence KLLLLGAGESGKST. GTP-binding positions include 41 to 48, 176 to 182, 201 to 205, 270 to 273, and A327; these read GAGESGKS, LRTRVKT, DVGGQ, and NKKD. Positions 48 and 182 each coordinate Mg(2+). Positions 174–182 are G2 motif; that stretch reads DVLRTRVKT. The segment at 197 to 206 is G3 motif; that stretch reads FKLFDVGGQR. The interval 266 to 273 is G4 motif; sequence ILFLNKKD. A G5 motif region spans residues 325–330; that stretch reads TCATDT.

The protein belongs to the G-alpha family. G(i/o/t/z) subfamily. In terms of assembly, g proteins are composed of 3 units; alpha, beta and gamma. The alpha chain contains the guanine nucleotide binding site.

In terms of biological role, guanine nucleotide-binding proteins (G proteins) are involved as modulators or transducers in various transmembrane signaling systems. In Homarus americanus (American lobster), this protein is Guanine nucleotide-binding protein G(i) subunit alpha.